The following is a 326-amino-acid chain: Tryptophan--tRNA ligase (326 aa).

Residues 11 to 13 (QPT) and 19 to 20 (GN) each bind ATP. The 'HIGH' region motif lies at 12–20 (PTGQIHLGN). Position 135 (aspartate 135) interacts with L-tryptophan. ATP is bound by residues 147-149 (GED), valine 186, and 195-199 (KMSKS). The 'KMSKS' region signature appears at 195–199 (KMSKS).

This sequence belongs to the class-I aminoacyl-tRNA synthetase family. As to quaternary structure, homodimer.

It is found in the cytoplasm. It catalyses the reaction tRNA(Trp) + L-tryptophan + ATP = L-tryptophyl-tRNA(Trp) + AMP + diphosphate + H(+). Its function is as follows. Catalyzes the attachment of tryptophan to tRNA(Trp). This is Tryptophan--tRNA ligase from Helicobacter pylori (strain J99 / ATCC 700824) (Campylobacter pylori J99).